Reading from the N-terminus, the 416-residue chain is Glutamyl-tRNA reductase (416 aa).

Substrate-binding positions include 46–49 (TCNR), serine 97, 102–104 (DHE), and glutamine 108. The active-site Nucleophile is cysteine 47. 178 to 183 (GAGMAA) is a binding site for NADP(+).

It belongs to the glutamyl-tRNA reductase family. Homodimer.

It catalyses the reaction (S)-4-amino-5-oxopentanoate + tRNA(Glu) + NADP(+) = L-glutamyl-tRNA(Glu) + NADPH + H(+). It functions in the pathway porphyrin-containing compound metabolism; protoporphyrin-IX biosynthesis; 5-aminolevulinate from L-glutamyl-tRNA(Glu): step 1/2. In terms of biological role, catalyzes the NADPH-dependent reduction of glutamyl-tRNA(Glu) to glutamate 1-semialdehyde (GSA). This chain is Glutamyl-tRNA reductase, found in Aeropyrum pernix (strain ATCC 700893 / DSM 11879 / JCM 9820 / NBRC 100138 / K1).